A 378-amino-acid chain; its full sequence is Quinolinate synthase (378 aa).

Iminosuccinate-binding residues include His59 and Ser80. Cys125 contacts [4Fe-4S] cluster. Residues 151-153 (YAN) and Ser168 contribute to the iminosuccinate site. Cys212 serves as a coordination point for [4Fe-4S] cluster. Residues 238 to 240 (HPE) and Thr255 contribute to the iminosuccinate site. Residue Cys309 coordinates [4Fe-4S] cluster.

It belongs to the quinolinate synthase family. Type 1 subfamily. It depends on [4Fe-4S] cluster as a cofactor.

Its subcellular location is the cytoplasm. The enzyme catalyses iminosuccinate + dihydroxyacetone phosphate = quinolinate + phosphate + 2 H2O + H(+). It participates in cofactor biosynthesis; NAD(+) biosynthesis; quinolinate from iminoaspartate: step 1/1. Catalyzes the condensation of iminoaspartate with dihydroxyacetone phosphate to form quinolinate. This chain is Quinolinate synthase, found in Burkholderia pseudomallei (strain 668).